The chain runs to 335 residues: UPF0353 protein Mvan_2751 (335 aa).

A run of 2 helical transmembrane segments spans residues Trp18–Met38 and Leu67–Thr87. The region spanning Val98–Leu294 is the VWFA domain. Residues Val309–Ile329 form a helical membrane-spanning segment.

It belongs to the UPF0353 family.

The protein resides in the cell membrane. In Mycolicibacterium vanbaalenii (strain DSM 7251 / JCM 13017 / BCRC 16820 / KCTC 9966 / NRRL B-24157 / PYR-1) (Mycobacterium vanbaalenii), this protein is UPF0353 protein Mvan_2751.